A 236-amino-acid polypeptide reads, in one-letter code: Phosphoribosylaminoimidazole-succinocarboxamide synthase (236 aa).

It belongs to the SAICAR synthetase family.

The catalysed reaction is 5-amino-1-(5-phospho-D-ribosyl)imidazole-4-carboxylate + L-aspartate + ATP = (2S)-2-[5-amino-1-(5-phospho-beta-D-ribosyl)imidazole-4-carboxamido]succinate + ADP + phosphate + 2 H(+). It participates in purine metabolism; IMP biosynthesis via de novo pathway; 5-amino-1-(5-phospho-D-ribosyl)imidazole-4-carboxamide from 5-amino-1-(5-phospho-D-ribosyl)imidazole-4-carboxylate: step 1/2. This chain is Phosphoribosylaminoimidazole-succinocarboxamide synthase, found in Streptococcus equi subsp. zooepidemicus (strain MGCS10565).